The chain runs to 549 residues: Frizzled-7-A (549 aa).

The signal sequence occupies residues 1 to 22 (MSSTVSLLFCCLFLQLCPSAQQ). The Extracellular segment spans residues 23-231 (YHGEKGISVP…EEEVRFARLW (209 aa)). Residues 32-151 (PDHGFCQPIS…HGAGEICVGQ (120 aa)) form the FZ domain. Intrachain disulfides connect cysteine 37–cysteine 98, cysteine 45–cysteine 91, cysteine 82–cysteine 119, cysteine 108–cysteine 148, and cysteine 112–cysteine 136. N-linked (GlcNAc...) asparagine glycosylation is present at asparagine 51. The N-linked (GlcNAc...) asparagine glycan is linked to asparagine 152. The chain crosses the membrane as a helical span at residues 232 to 252 (VGIWAILCCISTLFTVLTYLV). Residues 253–263 (DMRRFSYPERP) lie on the Cytoplasmic side of the membrane. The chain crosses the membrane as a helical span at residues 264-284 (IIFLSGCYFMVAVAYTAGFLL). At 285–311 (EERAVCVERFSEDSYRTVAQGTKKEGC) the chain is on the extracellular side. The chain crosses the membrane as a helical span at residues 312–332 (TILFMILYFFGMASSIWWVIL). Residues 333 to 354 (SLTWFLSAGMKWGHEAIEANSQ) lie on the Cytoplasmic side of the membrane. Residues 355–375 (YFHLAAWAVPAVKTITILAMG) form a helical membrane-spanning segment. The Extracellular segment spans residues 376–398 (QVDGDVLSGVCYVGINSVDSLRG). The helical transmembrane segment at 399 to 419 (FVLAPLFVYLFIGTSFLLAGF) threads the bilayer. Over 420-445 (VSLFRIRTIMKHDGTKTEKLEKLMVR) the chain is Cytoplasmic. Residues 446–466 (IGVFSVMYTVPATIVLACYFY) form a helical membrane-spanning segment. Topologically, residues 467–503 (EQAFRDTWEKTWLVQTCKGYAVPCPNYNFAPMSPDFT) are extracellular. The helical transmembrane segment at 504-524 (VFMIKYLMTMIVGITSSFWIW) threads the bilayer. Residues 525 to 549 (SGKTLQSWRRFYHRLSNGSKGETAV) lie on the Cytoplasmic side of the membrane. The Lys-Thr-X-X-X-Trp motif, mediates interaction with the PDZ domain of Dvl family members motif lies at 527-532 (KTLQSW). The PDZ-binding signature appears at 547 to 549 (TAV).

This sequence belongs to the G-protein coupled receptor Fz/Smo family. In terms of assembly, interacts with wnt11 and sdc4. The extracellular domain interacts with the extracellular domain of pcdh8/papc. As to expression, expressed in the animal region of cleavage stage embryos. During gastrulation, broadly expressed on the dorsal side of the embryo in deep mesodermal cells surrounding the blastopore lip and in presumptive anterior neuroectoderm. During neurulation, becomes progressively more restricted to the dorsal epidermis, neural plate, and neural tube. Expressed in the cranial neural crest of neurulae and tailbud embryos as well as the pronephros of tailbud embryos. Localized to the brain of neurulae, tailbud embryos and tadpoles. In tadpoles, strongly expressed in the eye and developing heart.

The protein localises to the cell membrane. It localises to the endosome membrane. Receptor for Wnt proteins. Acts in both canonical and non-canonical Wnt pathways. Although different papers report differing Wnt preferences, wnt5a, wnt8b and wnt11 have been proposed as synergists. In the canonical Wnt pathway, acts via beta-catenin to promote the expression of the dorsal genes siamois, twin and nodal3 and to establish the dorsal axis of the embryo and induce dorsal mesoderm formation. In a non-canonical Wnt/planar cell polarity (PCP) pathway, acts with sdc4 and dvl2/dsh to regulate convergent extension cell movements during gastrulation. Triggers phosphorylation of dvl2/dsh and its translocation to the plasma membrane. In a third branch of Wnt signaling, acts in a non-canonical pathway via trimeric G proteins, and independently of dvl2/dsh, to recruit protein kinase C (PKC) to the membrane and thus activate PKC. PKC signaling controls cell sorting and tissue separation during gastrulation. The sequence is that of Frizzled-7-A (fzd7-a) from Xenopus laevis (African clawed frog).